A 383-amino-acid polypeptide reads, in one-letter code: Aquaporin-5 (383 aa).

Residues 1–46 (MSVTTLNGQPTLNISGPGQTALSRLDPLKKVFTKFFSSIPQKVRGH) are Cytoplasmic-facing. Residues 47-67 (VVAVIGELIGTTAFLFIAFSA) form a helical membrane-spanning segment. Over 68-93 (AEVALASANDNKGDKVSYETKSISTT) the chain is Extracellular. The chain crosses the membrane as a helical span at residues 94–114 (QILFIAFGAGISLVVNAWTFF). R115 is a topological domain (cytoplasmic). The chain crosses the membrane as a helical span at residues 116–136 (ISGGLFDPAVSIALFFVGAID). The NPA 1 motif lies at 122–124 (DPA). At 137–140 (LTRC) the chain is on the extracellular side. The helical transmembrane segment at 141–161 (VLLCIAQCLGAIAASAMAYGL) threads the bilayer. Topologically, residues 162–180 (YHGGLHTATTLKPGMSPAQ) are cytoplasmic. Residues 181-201 (GVIVEMILTCQLCFTVLMLAA) form a helical membrane-spanning segment. Residues 202-207 (EKHEAT) are Extracellular-facing. Residues 208 to 228 (FLAPLGIGLSVFIGELAGVFW) traverse the membrane as a helical segment. Over 229–252 (TGGSMNPARSLGPAVVTLSFPSYH) the chain is Cytoplasmic. An NPA 2 motif is present at residues 234 to 236 (NPA). Residues 253 to 273 (WIYWVGPIAGAGLASIIYKLI) form a helical membrane-spanning segment. Over 274 to 383 (KALEYETAQL…DGFFGEMYAD (110 aa)) the chain is Extracellular. Over residues 332–349 (ARKSSSLVPTKSTKSGNS) the composition is skewed to polar residues. The disordered stretch occupies residues 332-383 (ARKSSSLVPTKSTKSGNSEVKKTETVVEEPAKTQPKPAPAADDGFFGEMYAD). Positions 350–362 (EVKKTETVVEEPA) are enriched in basic and acidic residues. Over residues 363–372 (KTQPKPAPAA) the composition is skewed to low complexity.

The protein belongs to the MIP/aquaporin (TC 1.A.8) family.

The protein localises to the membrane. It carries out the reaction H2O(in) = H2O(out). Its function is as follows. Water channel required to facilitate the transport of water across membranes. May play a role in the vegetative growth. The polypeptide is Aquaporin-5 (Botryotinia fuckeliana (strain B05.10) (Noble rot fungus)).